The primary structure comprises 245 residues: Brasilane terpene glycosides biosynthesis cluster protein D (245 aa).

C3H1-type zinc fingers lie at residues 121 to 152 and 161 to 185; these read KELK…HDNV and ICHF…HYPA. The segment at 186–245 is disordered; sequence PHRVTAPMPSKKKSKKLRSSVADDASHPDLGKARRHDPRDDEQNDEVWRNQGRARPGQEW. The segment covering 209 to 226 has biased composition (basic and acidic residues); sequence DASHPDLGKARRHDPRDD.

Its function is as follows. Part of the gene cluster that mediates the biosynthesis of the brasilane terpene glycosides brasilane D and E. The biosynthesis starts with the activity of the terpene cyclase braA that converts farnesyl pyrophosphate into the sesquiterpene alcohol trichobrasilenol. Subsequently, trichobrasilenol is glycosylated by the O-glycosyltransferase braB putatively using UDP-GlcNAc as sugar donor to yield brasilane A. The latter then undergoes two rounds of oxidation performed by the cytochrome P450 monooxygenase braC. In the first round braC hydroxylates C-12 forming brasilane D, which serves as substrate in the second round to establish the epoxide at the bond between C-5 and C-10 and oxidize the alcohol at C-12 to an aldehyde leading to the final product brasilane E. The protein is Brasilane terpene glycosides biosynthesis cluster protein D of Annulohypoxylon truncatum (Hypoxylon truncatum).